The following is a 384-amino-acid chain: Tetraacyldisaccharide 4'-kinase (384 aa).

72–79 (TAGGTGKT) is an ATP binding site.

This sequence belongs to the LpxK family.

It carries out the reaction a lipid A disaccharide + ATP = a lipid IVA + ADP + H(+). It functions in the pathway glycolipid biosynthesis; lipid IV(A) biosynthesis; lipid IV(A) from (3R)-3-hydroxytetradecanoyl-[acyl-carrier-protein] and UDP-N-acetyl-alpha-D-glucosamine: step 6/6. Its function is as follows. Transfers the gamma-phosphate of ATP to the 4'-position of a tetraacyldisaccharide 1-phosphate intermediate (termed DS-1-P) to form tetraacyldisaccharide 1,4'-bis-phosphate (lipid IVA). In Halothermothrix orenii (strain H 168 / OCM 544 / DSM 9562), this protein is Tetraacyldisaccharide 4'-kinase.